The sequence spans 652 residues: tRNA-guanine(15) transglycosylase (652 aa).

Asp88 serves as the catalytic Nucleophile. 2 residues coordinate substrate: Asp123 and Ala194. 3 residues coordinate Zn(2+): Cys280, Cys282, and Cys285. Residues 577–652 (KYRVVIDSEV…AAVSVRSGFK (76 aa)) enclose the PUA domain.

This sequence belongs to the archaeosine tRNA-ribosyltransferase family. The cofactor is Zn(2+).

It catalyses the reaction guanosine(15) in tRNA + 7-cyano-7-deazaguanine = 7-cyano-7-carbaguanosine(15) in tRNA + guanine. The protein operates within tRNA modification; archaeosine-tRNA biosynthesis. In terms of biological role, exchanges the guanine residue with 7-cyano-7-deazaguanine (preQ0) at position 15 in the dihydrouridine loop (D-loop) of archaeal tRNAs. This Methanococcus aeolicus (strain ATCC BAA-1280 / DSM 17508 / OCM 812 / Nankai-3) protein is tRNA-guanine(15) transglycosylase.